The following is a 123-amino-acid chain: MRKPQRGYARQDRVKEQIMRELAELVRTGLKDPRAGFITVNEVEVTRDYSHATVFYTILNQDAREITEEVLEHARGHLRSELAKRIKLFKIPELHFKYDESLERGLNLSALIDQVAAEKPVED.

It belongs to the RbfA family. In terms of assembly, monomer. Binds 30S ribosomal subunits, but not 50S ribosomal subunits or 70S ribosomes.

It localises to the cytoplasm. One of several proteins that assist in the late maturation steps of the functional core of the 30S ribosomal subunit. Associates with free 30S ribosomal subunits (but not with 30S subunits that are part of 70S ribosomes or polysomes). Required for efficient processing of 16S rRNA. May interact with the 5'-terminal helix region of 16S rRNA. This Neisseria meningitidis serogroup C (strain 053442) protein is Ribosome-binding factor A.